We begin with the raw amino-acid sequence, 294 residues long: 4-hydroxy-tetrahydrodipicolinate synthase (294 aa).

A pyruvate-binding site is contributed by T45. Y133 acts as the Proton donor/acceptor in catalysis. The active-site Schiff-base intermediate with substrate is the K161. I203 is a binding site for pyruvate.

The protein belongs to the DapA family. In terms of assembly, homotetramer; dimer of dimers.

The protein resides in the cytoplasm. It catalyses the reaction L-aspartate 4-semialdehyde + pyruvate = (2S,4S)-4-hydroxy-2,3,4,5-tetrahydrodipicolinate + H2O + H(+). Its pathway is amino-acid biosynthesis; L-lysine biosynthesis via DAP pathway; (S)-tetrahydrodipicolinate from L-aspartate: step 3/4. Its function is as follows. Catalyzes the condensation of (S)-aspartate-beta-semialdehyde [(S)-ASA] and pyruvate to 4-hydroxy-tetrahydrodipicolinate (HTPA). The sequence is that of 4-hydroxy-tetrahydrodipicolinate synthase from Alcanivorax borkumensis (strain ATCC 700651 / DSM 11573 / NCIMB 13689 / SK2).